A 348-amino-acid polypeptide reads, in one-letter code: Holliday junction branch migration complex subunit RuvB (348 aa).

A disordered region spans residues 1 to 20 (MKPPARMVSPERRSDDVGDT). The segment at 1–183 (MKPPARMVSP…FGIPIRLNFY (183 aa)) is large ATPase domain (RuvB-L). Residues Leu22, Arg23, Gly64, Lys67, Thr68, Thr69, 130–132 (EDF), Arg173, Tyr183, and Arg220 contribute to the ATP site. Thr68 is a binding site for Mg(2+). A small ATPAse domain (RuvB-S) region spans residues 184–254 (TVEELEGIVT…IADHALSALE (71 aa)). The interval 257–348 (AAGLDAMDRR…QIGLFGNDDD (92 aa)) is head domain (RuvB-H). 3 residues coordinate DNA: Arg293, Arg312, and Arg317.

The protein belongs to the RuvB family. In terms of assembly, homohexamer. Forms an RuvA(8)-RuvB(12)-Holliday junction (HJ) complex. HJ DNA is sandwiched between 2 RuvA tetramers; dsDNA enters through RuvA and exits via RuvB. An RuvB hexamer assembles on each DNA strand where it exits the tetramer. Each RuvB hexamer is contacted by two RuvA subunits (via domain III) on 2 adjacent RuvB subunits; this complex drives branch migration. In the full resolvosome a probable DNA-RuvA(4)-RuvB(12)-RuvC(2) complex forms which resolves the HJ.

It is found in the cytoplasm. It carries out the reaction ATP + H2O = ADP + phosphate + H(+). Its function is as follows. The RuvA-RuvB-RuvC complex processes Holliday junction (HJ) DNA during genetic recombination and DNA repair, while the RuvA-RuvB complex plays an important role in the rescue of blocked DNA replication forks via replication fork reversal (RFR). RuvA specifically binds to HJ cruciform DNA, conferring on it an open structure. The RuvB hexamer acts as an ATP-dependent pump, pulling dsDNA into and through the RuvAB complex. RuvB forms 2 homohexamers on either side of HJ DNA bound by 1 or 2 RuvA tetramers; 4 subunits per hexamer contact DNA at a time. Coordinated motions by a converter formed by DNA-disengaged RuvB subunits stimulates ATP hydrolysis and nucleotide exchange. Immobilization of the converter enables RuvB to convert the ATP-contained energy into a lever motion, pulling 2 nucleotides of DNA out of the RuvA tetramer per ATP hydrolyzed, thus driving DNA branch migration. The RuvB motors rotate together with the DNA substrate, which together with the progressing nucleotide cycle form the mechanistic basis for DNA recombination by continuous HJ branch migration. Branch migration allows RuvC to scan DNA until it finds its consensus sequence, where it cleaves and resolves cruciform DNA. The chain is Holliday junction branch migration complex subunit RuvB from Bradyrhizobium sp. (strain ORS 278).